The chain runs to 347 residues: Tetraacyldisaccharide 4'-kinase (347 aa).

Residue 54–61 (TVGGAGKT) coordinates ATP.

Belongs to the LpxK family.

It carries out the reaction a lipid A disaccharide + ATP = a lipid IVA + ADP + H(+). It functions in the pathway glycolipid biosynthesis; lipid IV(A) biosynthesis; lipid IV(A) from (3R)-3-hydroxytetradecanoyl-[acyl-carrier-protein] and UDP-N-acetyl-alpha-D-glucosamine: step 6/6. Functionally, transfers the gamma-phosphate of ATP to the 4'-position of a tetraacyldisaccharide 1-phosphate intermediate (termed DS-1-P) to form tetraacyldisaccharide 1,4'-bis-phosphate (lipid IVA). In Rhizobium etli (strain CIAT 652), this protein is Tetraacyldisaccharide 4'-kinase.